We begin with the raw amino-acid sequence, 70 residues long: Small ribosomal subunit protein bS21 (70 aa).

This sequence belongs to the bacterial ribosomal protein bS21 family.

The chain is Small ribosomal subunit protein bS21 from Wolinella succinogenes (strain ATCC 29543 / DSM 1740 / CCUG 13145 / JCM 31913 / LMG 7466 / NCTC 11488 / FDC 602W) (Vibrio succinogenes).